We begin with the raw amino-acid sequence, 265 residues long: MMKFAFKIAYFGDNFHGSQFQPDQRTVEGEVINALRRLGVENPRLRSAGRTDAGVHAYGQVISFYSEDKIFPRMLNAELPEDITAWAWAKVSEDFDPRRAKSRVYTYVMYGSDYDISAMRKAVKELIGVHDFSNFTKKFGEGESCVREIISADIRADREFIIFEIEGNAFTWNMVRCIVTAIMEIGKQHRSIEWFRDLLNPEKHKERVEPAPPYGLILKDVKYDDVEFEIDDYAFKTLQSRIEDRIIYHGTIFKLFSLFRQSGIS.

The active-site Nucleophile is D52. Residue Y105 participates in substrate binding.

It belongs to the tRNA pseudouridine synthase TruA family.

It carries out the reaction uridine(38/39/40) in tRNA = pseudouridine(38/39/40) in tRNA. Functionally, formation of pseudouridine at positions 38, 39 and 40 in the anticodon stem and loop of transfer RNAs. In Archaeoglobus fulgidus (strain ATCC 49558 / DSM 4304 / JCM 9628 / NBRC 100126 / VC-16), this protein is tRNA pseudouridine synthase A.